Here is a 447-residue protein sequence, read N- to C-terminus: Protein O-GlcNAcase (447 aa).

Residues 1–277 form the GH84 domain; it reads MLTGVIEGFY…TTGAYLADPD (277 aa). A protein is bound by residues Gly8, Lys39, and Asp115. The active-site Proton donor is the Asp116. Residues Tyr160, 219–221, Asp226, and Asn254 each bind a protein; that span reads WDN.

The protein belongs to the glycosyl hydrolase 84 family.

The enzyme catalyses 3-O-(N-acetyl-beta-D-glucosaminyl)-L-seryl-[protein] + H2O = N-acetyl-D-glucosamine + L-seryl-[protein]. It catalyses the reaction 3-O-(N-acetyl-beta-D-glucosaminyl)-L-threonyl-[protein] + H2O = L-threonyl-[protein] + N-acetyl-D-glucosamine. Its activity is regulated as follows. Inhibited by PUGNac (O-(2-acetamido-2-deoxy-D-glucopyranosylidene)amino-N-phenylcarbamate). Functionally, cleaves GlcNAc from O-glycosylated proteins. Can use p-nitrophenyl-beta-GlcNAc and 4-methylumbelliferone-GlcNAc as substrate (in vitro). In Oceanicola granulosus (strain ATCC BAA-861 / DSM 15982 / KCTC 12143 / HTCC2516), this protein is Protein O-GlcNAcase.